A 238-amino-acid polypeptide reads, in one-letter code: Leucyl/phenylalanyl-tRNA--protein transferase (238 aa).

The protein belongs to the L/F-transferase family.

It is found in the cytoplasm. The enzyme catalyses N-terminal L-lysyl-[protein] + L-leucyl-tRNA(Leu) = N-terminal L-leucyl-L-lysyl-[protein] + tRNA(Leu) + H(+). It catalyses the reaction N-terminal L-arginyl-[protein] + L-leucyl-tRNA(Leu) = N-terminal L-leucyl-L-arginyl-[protein] + tRNA(Leu) + H(+). The catalysed reaction is L-phenylalanyl-tRNA(Phe) + an N-terminal L-alpha-aminoacyl-[protein] = an N-terminal L-phenylalanyl-L-alpha-aminoacyl-[protein] + tRNA(Phe). Functions in the N-end rule pathway of protein degradation where it conjugates Leu, Phe and, less efficiently, Met from aminoacyl-tRNAs to the N-termini of proteins containing an N-terminal arginine or lysine. This Pseudoalteromonas translucida (strain TAC 125) protein is Leucyl/phenylalanyl-tRNA--protein transferase.